A 363-amino-acid polypeptide reads, in one-letter code: GTP-binding protein 1 (363 aa).

Residues 63-287 (ARVAFIGFPS…LKERIWEELN (225 aa)) enclose the OBG-type G domain. GTP-binding positions include 69–76 (GFPSVGKS), 115–119 (DLPGI), and 246–249 (KIDA). A TGS domain is found at 287 to 362 (NLYRIYTKRK…EEGDVVTIVT (76 aa)).

It belongs to the TRAFAC class OBG-HflX-like GTPase superfamily. OBG GTPase family.

The protein is GTP-binding protein 1 (gtp1) of Schizosaccharomyces pombe (strain 972 / ATCC 24843) (Fission yeast).